Consider the following 475-residue polypeptide: MSPQTETKASVGFKAGVKDYKLTYHTPDYQTKDTDILAAFRVTPQPGVPPEEAGAAVAAESSTGTWTTVWTDGLTSLDRYKGRCYHIEPVAGEENQFIAYVAYPLDLFEEGSVTNMFTSIVGNVFGFKALRALRLEDLRIPTSYSKTFQGPPHGIQVERDKLNKYGRPLLGCTIKPKLGLSAKNYGRAVYECLRGGLDFTKDDENVNSQPFMRWRDRFVFCAEAIYKAQAETGEIKGHYLNATAGTCEEMIKRAVFARELGVPIVMHDYLTGGFTANTSLAHYCRDNGLLLHIHRAMHAVIDRQKNHGIHFRVLAKALRMSGGDHIHAGTVVGKLEGEREITLGFVDLLRDDYIEKDRSRGIYFTQDWVSLPGVLPVASGGIHVWHMPALTEIFGDDSVLQFGGGTLGHPWGNAPGAVANRVALEACVQARNEGRDLAREGNEIIREAAKWSPELAAACEVWKEIKFEFPAMDTL.

Residues 1–2 constitute a propeptide that is removed on maturation; the sequence is MS. P3 carries the post-translational modification N-acetylproline. An N6,N6,N6-trimethyllysine modification is found at K14. The substrate site is built by N123 and T173. K175 acts as the Proton acceptor in catalysis. K177 provides a ligand contact to substrate. The Mg(2+) site is built by K201, D203, and E204. An N6-carboxylysine modification is found at K201. The active-site Proton acceptor is the H294. Positions 295, 327, and 379 each coordinate substrate.

This sequence belongs to the RuBisCO large chain family. Type I subfamily. As to quaternary structure, heterohexadecamer of 8 large chains and 8 small chains; disulfide-linked. The disulfide link is formed within the large subunit homodimers. Mg(2+) is required as a cofactor. Post-translationally, the disulfide bond which can form in the large chain dimeric partners within the hexadecamer appears to be associated with oxidative stress and protein turnover.

It localises to the plastid. The protein localises to the chloroplast. It carries out the reaction 2 (2R)-3-phosphoglycerate + 2 H(+) = D-ribulose 1,5-bisphosphate + CO2 + H2O. The catalysed reaction is D-ribulose 1,5-bisphosphate + O2 = 2-phosphoglycolate + (2R)-3-phosphoglycerate + 2 H(+). In terms of biological role, ruBisCO catalyzes two reactions: the carboxylation of D-ribulose 1,5-bisphosphate, the primary event in carbon dioxide fixation, as well as the oxidative fragmentation of the pentose substrate in the photorespiration process. Both reactions occur simultaneously and in competition at the same active site. The polypeptide is Ribulose bisphosphate carboxylase large chain (Quercus rubra (Northern red oak)).